Here is a 632-residue protein sequence, read N- to C-terminus: MAEETQHNKLAAAKKKLKEYWQKNSPRVPAGANRNRKTNGSIPQTATSGGCQPPGDSATGFHREGPTSSATLKDLESPCQERAVVLDSRSVEISQLKNTIKSLKQQKKQVEHQLEEEKKANNKKQKAKRVLEVQLQTLNIQKEELNTDLYHMKRSLRYFEEKSKDLAVRLQHSLQRKGELESVLSDVMATQKKKANQLSSPSKAGTEWKLEQSMREEALLKVQLTQLKESFQQVQLERDEYSEHLKGERARWQQRMRKMSQEICTLKKEKQQDMRRVEKLERSLSKLKNQMAEPLPPEPPAVPSEVELQHLRKELERVAGELQAQVKNNQRISLLNQRQEERIREQEERLRKQEERIQEQHKSLQQLAKPQSVFEEPNNENKSTLQLEQQVKELQEKLGEEHLEAASQQNQQLTAQLSLMALPGEGHGGEHLDSEGEEAPQPMPSVPEDPESREAMSSFMDHLEEKADLSELVKKQELRFIQYWQERCHQKIHHLLSEPGGRAKDAALGGGHHQAGAQGGDEGEAAGAAADGIAAYSNYNNGHRKFLAAAHNSADEPGPGAPAPQELGAADKHGDLCEVSLTSSAQGEAREDPLLDKPTAQPIVQDHQEHPGLGSNCCVPFFCWAWLPRRRR.

Positions 1-77 (MAEETQHNKL…SSATLKDLES (77 aa)) are disordered. The segment covering 38–50 (TNGSIPQTATSGG) has biased composition (polar residues). 2 coiled-coil regions span residues 86 to 154 (LDSR…HMKR) and 209 to 421 (KLEQ…SLMA). Over residues 352–362 (KQEERIQEQHK) the composition is skewed to basic and acidic residues. Disordered stretches follow at residues 352–384 (KQEE…NKST), 422–456 (LPGE…REAM), and 505–524 (DAAL…DEGE). The span at 508 to 520 (LGGGHHQAGAQGG) shows a compositional bias: gly residues.

It belongs to the GOLGA8 family.

In Homo sapiens (Human), this protein is Golgin subfamily A member 8M.